Here is a 209-residue protein sequence, read N- to C-terminus: UPF0502 protein PSHAa0076 (209 aa).

It belongs to the UPF0502 family.

The protein is UPF0502 protein PSHAa0076 of Pseudoalteromonas translucida (strain TAC 125).